A 253-amino-acid chain; its full sequence is Pro-opiomelanocortin A (253 aa).

An N-terminal signal peptide occupies residues 1-21; sequence MLCPAWLLAVAVVGVVRGVKG. Gln-22 bears the Pyrrolidone carboxylic acid mark. 2 cysteine pairs are disulfide-bonded: Cys-23–Cys-45 and Cys-29–Cys-41. Ser-104 is subject to N-acetylserine; in Corticotropin. The residue at position 116 (Val-116) is a Valine amide. The disordered stretch occupies residues 228-253; it reads QKREQWGREEGEEKRALGERKYHFQG. Gln-252 is subject to Glutamine amide; partial.

Belongs to the POMC family. Specific enzymatic cleavages at paired basic residues yield the different active peptides. In terms of processing, acetylation of beta-endorphin occurs in a tissue-specific manner. In terms of tissue distribution, C-terminal peptide 1 and C-terminal peptide 2 are detected in the anterior part of the nucleus lateralis tuberis of hypothalamus, in dorsal hypothalamus, thalamus, telencephalon, optic tectum and medulla oblongata (at protein level). Expressed in pituitary and hypothalamus of adult diploid animals, and hypothalamus of triploid and ovulated female trout.

The protein localises to the secreted. Functionally, stimulates the adrenal glands to release cortisol. Its function is as follows. Melanocyte-stimulating hormone alpha: Anorexigenic peptide. Increases the pigmentation of skin by increasing melanin production in melanocytes. In terms of biological role, melanocyte-stimulating hormone beta: Increases the pigmentation of skin by increasing melanin production in melanocytes. Beta-endorphin: Endogenous orexigenic opiate. Functionally, endogenous opiate. The polypeptide is Pro-opiomelanocortin A (pomca) (Oncorhynchus mykiss (Rainbow trout)).